A 735-amino-acid polypeptide reads, in one-letter code: Mitochondrial potassium channel ATP-binding subunit (735 aa).

A mitochondrion-targeting transit peptide spans 1-25 (MLVHLFRVGIRGGPFPGRLLPPLRF). The Mitochondrial matrix segment spans residues 26–144 (QTFSAVRNTW…KLFWQFLHPH (119 aa)). The helical transmembrane segment at 145–165 (LLVLGVAVVLALGAALVNVQI) threads the bilayer. An ABC transmembrane type-1 domain is found at 150 to 437 (VAVVLALGAA…LSVLFGQVVR (288 aa)). The Mitochondrial intermembrane segment spans residues 166–195 (PLLLGQLVEVVAKYTRDHVGSFMTESQNLS). A helical membrane pass occupies residues 196–216 (THLLILYGVQGLLTFGYLVLL). Over 217–295 (SHVGERMAVD…SLSMLSTRLT (79 aa)) the chain is Mitochondrial matrix. Residues 296–316 (LLLMVATPALMGVGTLMGSGL) form a helical membrane-spanning segment. Residues 317 to 735 (RKLSRQCQEQ…EGPRSHQHKS (419 aa)) are Mitochondrial intermembrane-facing. Residues 472-709 (VTFQNVCFSY…GGLYAELIRR (238 aa)) enclose the ABC transporter domain. 507-514 (GQSGGGKT) is a binding site for ATP. A disordered region spans residues 712-735 (LDAPRTAAPPPKKPEGPRSHQHKS).

Belongs to the ABC transporter superfamily. ABCB family. Multidrug resistance exporter (TC 3.A.1.201) subfamily. As to quaternary structure, the mitochondrial potassium channel (mitoK(ATP)) is composed of 4 subunits of CCDC51/MITOK and 4 subunits of ABCB8/MITOSUR. Interacts with C10orf88/PAAT. Interacts with NRP1; NRP1 regulates ABCB8/MITOSUR protein levels in mitochondria. In terms of tissue distribution, ubiquitous.

The protein resides in the mitochondrion inner membrane. Channel activity inhibited by ATP via ABCB8/MITOSUR subunit. ATP-binding subunit of the mitochondrial ATP-gated potassium channel (mitoK(ATP)). Together with pore-forming subunit CCDC51/MITOK of the mitoK(ATP) channel, mediates ATP-dependent potassium currents across the mitochondrial inner membrane. An increase in ATP intracellular levels closes the channel, inhibiting K(+) transport, whereas a decrease in ATP levels enhances K(+) uptake in the mitochondrial matrix. Plays a role in mitochondrial iron transport. Required for maintenance of normal cardiac function, possibly by influencing mitochondrial iron export and regulating the maturation of cytosolic iron sulfur cluster-containing enzymes. The chain is Mitochondrial potassium channel ATP-binding subunit from Homo sapiens (Human).